The following is a 30-amino-acid chain: Cyclotide hypa-A (30 aa).

Residues 1–30 constitute a cross-link (cyclopeptide (Gly-Asn)); that stretch reads GIPCAESCVYIPCTITALLGCSCKNKVCYN. Intrachain disulfides connect C4–C21, C8–C23, and C13–C28.

This is a cyclic peptide.

In terms of biological role, probably participates in a plant defense mechanism. The sequence is that of Cyclotide hypa-A from Pombalia parviflora (Violetilla).